Reading from the N-terminus, the 303-residue chain is MRAPRRRCYRVRPMHDVSKLEKRLLRAAANAIRDFELIGDGDRIMVAVSGGKDSYTLLHVLMRLRERAPIDFDLVAVNLDQGQPGYPAEIVERHFQAVGVPHRMLYADTYSIVRRLVPEGKTTCPVCSRLRRGVLYNAAAEMGCTKIALGHHRDDLVETLLLSALYSGALKSMPPKLRSDDGRNVVVRPLCYAAEEDIAAFATAMRFPIVPCDLCGSQPNLRRKRVKALLAELSDEHPAVKGNLLNALGHVVPSHLLDRDLHRLVASTGRDPWLDGDEDEDGGCLQGEVADALVKLAGAREDA.

The short motif at 49–54 (SGGKDS) is the PP-loop motif element. 3 residues coordinate [4Fe-4S] cluster: Cys-124, Cys-127, and Cys-215.

It belongs to the TtcA family. As to quaternary structure, homodimer. It depends on Mg(2+) as a cofactor. Requires [4Fe-4S] cluster as cofactor.

It is found in the cytoplasm. The catalysed reaction is cytidine(32) in tRNA + S-sulfanyl-L-cysteinyl-[cysteine desulfurase] + AH2 + ATP = 2-thiocytidine(32) in tRNA + L-cysteinyl-[cysteine desulfurase] + A + AMP + diphosphate + H(+). Its pathway is tRNA modification. Its function is as follows. Catalyzes the ATP-dependent 2-thiolation of cytidine in position 32 of tRNA, to form 2-thiocytidine (s(2)C32). The sulfur atoms are provided by the cysteine/cysteine desulfurase (IscS) system. The polypeptide is tRNA-cytidine(32) 2-sulfurtransferase (Anaeromyxobacter sp. (strain Fw109-5)).